Consider the following 132-residue polypeptide: MTMSDPIADMLTRVRNANMVRHEKIELPASNIKKQIAEILKSEGFIKNVEFVEDDKQGVLRLFLKYGQNNERVITGLKRISKPGLRVYAKADEVPKVLNGLGIALVSTSEGIVTDREARKRNVGGEVLAYVW.

The protein belongs to the universal ribosomal protein uS8 family. In terms of assembly, part of the 30S ribosomal subunit. Contacts proteins S5 and S12.

Its function is as follows. One of the primary rRNA binding proteins, it binds directly to 16S rRNA central domain where it helps coordinate assembly of the platform of the 30S subunit. The chain is Small ribosomal subunit protein uS8 from Staphylococcus carnosus (strain TM300).